The chain runs to 317 residues: Glucose-6-phosphate isomerase, cytosolic 2B (317 aa).

Glu108 functions as the Proton donor in the catalytic mechanism. Catalysis depends on residues His139 and Lys264.

It belongs to the GPI family. As to quaternary structure, homodimer.

The protein resides in the cytoplasm. The catalysed reaction is alpha-D-glucose 6-phosphate = beta-D-fructose 6-phosphate. Its pathway is carbohydrate degradation; glycolysis; D-glyceraldehyde 3-phosphate and glycerone phosphate from D-glucose: step 2/4. This Clarkia lewisii (Farewell-to-spring) protein is Glucose-6-phosphate isomerase, cytosolic 2B (PGIC2-B).